The chain runs to 159 residues: Transcription antitermination protein NusB (159 aa).

Positions 1–20 (MNKNTQGKPSGKPVRRDGVD) are disordered.

This sequence belongs to the NusB family.

Involved in transcription antitermination. Required for transcription of ribosomal RNA (rRNA) genes. Binds specifically to the boxA antiterminator sequence of the ribosomal RNA (rrn) operons. This Stenotrophomonas maltophilia (strain R551-3) protein is Transcription antitermination protein NusB.